We begin with the raw amino-acid sequence, 362 residues long: uncharacterized protein (362 aa).

The chain crosses the membrane as a helical span at residues 13–33 (VLILSVGLNMLFLLLFYSAIF). Positions 314-357 (EEYVVQDGDSLWLIAKRFGIPMDKIIQKNGLNHHRLFPGKVLKL) constitute a LysM domain.

It belongs to the chlamydial CPn_0593/CT_474/TC_0759 family.

Its subcellular location is the membrane. This is an uncharacterized protein from Chlamydia pneumoniae (Chlamydophila pneumoniae).